A 260-amino-acid chain; its full sequence is Thiazole synthase (260 aa).

Lys96 serves as the catalytic Schiff-base intermediate with DXP. 1-deoxy-D-xylulose 5-phosphate contacts are provided by residues Gly157, 184 to 185, and 206 to 207; these read AG and NT.

The protein belongs to the ThiG family. Homotetramer. Forms heterodimers with either ThiH or ThiS.

It localises to the cytoplasm. The enzyme catalyses [ThiS sulfur-carrier protein]-C-terminal-Gly-aminoethanethioate + 2-iminoacetate + 1-deoxy-D-xylulose 5-phosphate = [ThiS sulfur-carrier protein]-C-terminal Gly-Gly + 2-[(2R,5Z)-2-carboxy-4-methylthiazol-5(2H)-ylidene]ethyl phosphate + 2 H2O + H(+). It participates in cofactor biosynthesis; thiamine diphosphate biosynthesis. Functionally, catalyzes the rearrangement of 1-deoxy-D-xylulose 5-phosphate (DXP) to produce the thiazole phosphate moiety of thiamine. Sulfur is provided by the thiocarboxylate moiety of the carrier protein ThiS. In vitro, sulfur can be provided by H(2)S. The chain is Thiazole synthase from Nitrobacter hamburgensis (strain DSM 10229 / NCIMB 13809 / X14).